The following is a 137-amino-acid chain: Large ribosomal subunit protein uL16 (137 aa).

This sequence belongs to the universal ribosomal protein uL16 family. In terms of assembly, part of the 50S ribosomal subunit.

Its function is as follows. Binds 23S rRNA and is also seen to make contacts with the A and possibly P site tRNAs. This Rhodopseudomonas palustris (strain BisB18) protein is Large ribosomal subunit protein uL16.